Here is a 346-residue protein sequence, read N- to C-terminus: Selenide, water dikinase (346 aa).

Residue selenocysteine 17 is part of the active site. Position 17 (selenocysteine 17) is a non-standard amino acid, selenocysteine. ATP is bound by residues lysine 20 and 47 to 49 (TSD). A Mg(2+)-binding site is contributed by aspartate 50. ATP is bound by residues aspartate 67, aspartate 90, and 138-140 (GHT). A Mg(2+)-binding site is contributed by aspartate 90. Aspartate 226 contacts Mg(2+).

Belongs to the selenophosphate synthase 1 family. Class I subfamily. Homodimer. Mg(2+) is required as a cofactor.

The enzyme catalyses hydrogenselenide + ATP + H2O = selenophosphate + AMP + phosphate + 2 H(+). Its function is as follows. Synthesizes selenophosphate from selenide and ATP. This chain is Selenide, water dikinase, found in Trichlorobacter lovleyi (strain ATCC BAA-1151 / DSM 17278 / SZ) (Geobacter lovleyi).